An 803-amino-acid polypeptide reads, in one-letter code: Rho guanine nucleotide exchange factor 7 (803 aa).

Met1 carries the N-acetylmethionine modification. One can recognise a Calponin-homology (CH) domain in the interval 1-133; that stretch reads MNSAEQTVTW…SLVTLNKVTA (133 aa). N-acetylthreonine is present on Asn2. 2 positions are modified to phosphoserine: Ser153 and Ser176. Positions 184–243 constitute an SH3 domain; it reads NNQLVVRAKFNFQQTNEDELSFSKGDVIHVTRVEEGGWWEGTLNGRTGWFPSNYVREVKA. 2 positions are modified to phosphoserine: Ser249 and Ser257. Positions 271 to 451 constitute a DH domain; that stretch reads YYNVVLQNIL…KNLSAQCQEV (181 aa). The region spanning 473–578 is the PH domain; the sequence is DIKTLGNVTY…WVEHLQKQTK (106 aa). Residues Ser518, Cys560, and Val579 each carry the phosphoserine modification. Residues 580-655 form a disordered region; it reads TSVGNPTIKP…TPKPWSLSCL (76 aa). The span at 593 to 606 shows a compositional bias: polar residues; the sequence is PSHTLPSHPVTPSS. 2 positions are modified to phosphoserine: Lys645 and Ser664. Basic residues predominate over residues 678-690; sequence KTMKKLLPKRKPE. 2 disordered regions span residues 678-704 and 748-773; these read KTMKKLLPKRKPERKPSDEEFASRKST and DDQPSLDSLGRRSSLSRLEPSDLSED. Over residues 691-700 the composition is skewed to basic and acidic residues; the sequence is RKPSDEEFAS. Phosphoserine; by CaMK1 is present on Ser694. Residues 752–765 are compositionally biased toward low complexity; sequence SLDSLGRRSSLSRL.

Interacts with PAK kinases through the SH3 domain. Interacts with GIT1 and TGFB1I1. Interacts with PTK2/FAK1 and RAC1. Interacts with ITCH and PARVB. Interacts with unphosphorylated PAK1. Interacts with SCRIB; interaction is direct and may play a role in regulation of apoptosis. Interacts with FRMPD4 (via N-terminus). Interacts with CaMK1. Interacts with BIN2. Interacts with YWHAZ. Interacts (via PH domain) with NOX1 (via FAD-binding FR-type domain). In terms of assembly, interacts with SNX27. Phosphorylated by PTK2/FAK1; this promotes interaction with RAC1. Phosphorylated on Ser-694 by CaMK1; enhancement of GEF activity and downstream activation of RAC1.

It is found in the cell junction. The protein localises to the focal adhesion. Its subcellular location is the cell projection. The protein resides in the ruffle. It localises to the cytoplasm. It is found in the cell cortex. The protein localises to the lamellipodium. Functionally, acts as a RAC1 guanine nucleotide exchange factor (GEF) and can induce membrane ruffling. Functions in cell migration, attachment and cell spreading. Promotes targeting of RAC1 to focal adhesions. May function as a positive regulator of apoptosis. Downstream of NMDA receptors and CaMKK-CaMK1 signaling cascade, promotes the formation of spines and synapses in hippocampal neurons. The protein is Rho guanine nucleotide exchange factor 7 (ARHGEF7) of Homo sapiens (Human).